The sequence spans 61 residues: U-poneritoxin(01)-Om5b (61 aa).

The signal sequence occupies residues 1–23; sequence MKLSALSLAFAIILMMTIMYTKA. The propeptide occupies 24–41; that stretch reads DADASADAEADADAEAEA. Gln-59 is modified (glutamine amide).

Belongs to the formicidae venom precursor-01 superfamily. In terms of processing, truncated sequences of this peptide have also been found in the venom. It is possible they have been cleaved in the venom. As to expression, expressed by the venom gland.

Its subcellular location is the secreted. Acidic peptide with potent hemolytic activities. It also shows low antimicrobial activities against E.coli (MIC=50uM), as well as histamine-releasing activity (28.3% at 10 uM). Does not have activity against S.aureus, and S.cerevisiae. The sequence is that of U-poneritoxin(01)-Om5b from Odontomachus monticola (Trap-jaw ant).